The sequence spans 632 residues: Threonine--tRNA ligase (632 aa).

The region spanning 1–61 (MPIITLPDGT…KTDANLAIIT (61 aa)) is the TGS domain. Positions 242-533 (DHRKIGKIQD…LIEHYEGAYP (292 aa)) are catalytic. Residues Cys333, His384, and His510 each contribute to the Zn(2+) site.

It belongs to the class-II aminoacyl-tRNA synthetase family. As to quaternary structure, homodimer. Requires Zn(2+) as cofactor.

Its subcellular location is the cytoplasm. The catalysed reaction is tRNA(Thr) + L-threonine + ATP = L-threonyl-tRNA(Thr) + AMP + diphosphate + H(+). Its function is as follows. Catalyzes the attachment of threonine to tRNA(Thr) in a two-step reaction: L-threonine is first activated by ATP to form Thr-AMP and then transferred to the acceptor end of tRNA(Thr). Also edits incorrectly charged L-seryl-tRNA(Thr). The protein is Threonine--tRNA ligase of Ruthia magnifica subsp. Calyptogena magnifica.